A 458-amino-acid chain; its full sequence is MSFLDRVKIYVKAGKGGDGCLSFRREKFIEFGGPNGGNGGKGGDVYIKTERNLTTLLELAYNPHIEAKNGEKGGTYNKTGVGADDLTIYVPCGTIVKKDGEIIADLTEEGQSVLVAKGGRGGRGNQSFKTHSNTAPRISEIGQPGEEITLYLELKVLADLGLVGFPNAGKSTFLSRVSAARPKIADYPFTTLNPNLGIAMHKKVSFVIADIPGIIEGASEGKGLGHQFLKHIERTRVLLHLVDPMGFKDIDAVESVKVIEKELKTFDRELAKKPRIIALNKADLPEAKEVYNKIVKKYKKHKVFLISAATGEGVDKVLNEIVKVISATPVPNVAISKSTVAVHGVEPLFKIVPLEDGRVQVFGRKIEDMVNMTHFNQLQGVERLRNIFKKIGLEKALIKKGVMPGDIIVVGQKEFEWSGTELDSERAEQPDFEGYKRRTTQAERLEKRRQRRLKKEEK.

The region spanning 1–157 (MSFLDRVKIY…ITLYLELKVL (157 aa)) is the Obg domain. An OBG-type G domain is found at 158-326 (ADLGLVGFPN…VLNEIVKVIS (169 aa)). GTP contacts are provided by residues 164–171 (GFPNAGKS), 189–193 (FTTLN), 210–213 (DIPG), 280–283 (NKAD), and 307–309 (SAA). Serine 171 and threonine 191 together coordinate Mg(2+). In terms of domain architecture, OCT spans 341 to 419 (AVHGVEPLFK…VGQKEFEWSG (79 aa)). Residues 420–458 (TELDSERAEQPDFEGYKRRTTQAERLEKRRQRRLKKEEK) are disordered. Positions 423 to 446 (DSERAEQPDFEGYKRRTTQAERLE) are enriched in basic and acidic residues. Residues 447 to 458 (KRRQRRLKKEEK) show a composition bias toward basic residues.

The protein belongs to the TRAFAC class OBG-HflX-like GTPase superfamily. OBG GTPase family. Monomer. The cofactor is Mg(2+).

The protein localises to the cytoplasm. Its function is as follows. An essential GTPase which binds GTP, GDP and possibly (p)ppGpp with moderate affinity, with high nucleotide exchange rates and a fairly low GTP hydrolysis rate. Plays a role in control of the cell cycle, stress response, ribosome biogenesis and in those bacteria that undergo differentiation, in morphogenesis control. This chain is GTPase Obg, found in Elusimicrobium minutum (strain Pei191).